The chain runs to 355 residues: Protein-glutamate methylesterase/protein-glutamine glutaminase 3 (355 aa).

Positions 8–126 (RVLVVDDSPT…AEELRRWGKE (119 aa)) constitute a Response regulatory domain. Residue Asp59 is modified to 4-aspartylphosphate. One can recognise a CheB-type methylesterase domain in the interval 152–337 (PPTGARVDIF…LASMPELILQ (186 aa)). Residues Ser166, His193, and Asp284 contribute to the active site.

This sequence belongs to the CheB family. Phosphorylated by CheA. Phosphorylation of the N-terminal regulatory domain activates the methylesterase activity.

It localises to the cytoplasm. The enzyme catalyses [protein]-L-glutamate 5-O-methyl ester + H2O = L-glutamyl-[protein] + methanol + H(+). It carries out the reaction L-glutaminyl-[protein] + H2O = L-glutamyl-[protein] + NH4(+). In terms of biological role, involved in chemotaxis. Part of a chemotaxis signal transduction system that modulates chemotaxis in response to various stimuli. Catalyzes the demethylation of specific methylglutamate residues introduced into the chemoreceptors (methyl-accepting chemotaxis proteins or MCP) by CheR. Also mediates the irreversible deamidation of specific glutamine residues to glutamic acid. This Myxococcus xanthus (strain DK1622) protein is Protein-glutamate methylesterase/protein-glutamine glutaminase 3.